Reading from the N-terminus, the 164-residue chain is UPF0304 protein YPDSF_1971 (164 aa).

This sequence belongs to the UPF0304 family.

The sequence is that of UPF0304 protein YPDSF_1971 from Yersinia pestis (strain Pestoides F).